The chain runs to 186 residues: Large ribosomal subunit protein uL6 (186 aa).

It belongs to the universal ribosomal protein uL6 family. As to quaternary structure, part of the 50S ribosomal subunit.

This protein binds to the 23S rRNA, and is important in its secondary structure. It is located near the subunit interface in the base of the L7/L12 stalk, and near the tRNA binding site of the peptidyltransferase center. The polypeptide is Large ribosomal subunit protein uL6 (Sulfurisphaera tokodaii (strain DSM 16993 / JCM 10545 / NBRC 100140 / 7) (Sulfolobus tokodaii)).